We begin with the raw amino-acid sequence, 279 residues long: Protease HtpX homolog (279 aa).

The next 2 helical transmembrane spans lie at 4-24 (IFLF…VLAV) and 34-54 (GSLL…SLLM). H140 serves as a coordination point for Zn(2+). E141 is an active-site residue. H144 lines the Zn(2+) pocket. A run of 2 helical transmembrane segments spans residues 155–175 (LIQG…ANLI) and 189–209 (FLVS…IVMW). E215 provides a ligand contact to Zn(2+).

It belongs to the peptidase M48B family. Requires Zn(2+) as cofactor.

It is found in the cell inner membrane. The protein is Protease HtpX homolog of Neisseria meningitidis serogroup B (strain ATCC BAA-335 / MC58).